Here is a 322-residue protein sequence, read N- to C-terminus: Crystallin J1B (322 aa).

This sequence belongs to the ADP-ribosylglycohydrolase family. J1 crystallin subfamily. In terms of tissue distribution, expressed in the rhopalia. Present in both the large and small eyes.

The sequence is that of Crystallin J1B from Tripedalia cystophora (Jellyfish).